The sequence spans 330 residues: MTNNRVRVAVTGAAGQIGYALVFRIASGQMFGPNTEVELNLLELEPALPSLEGVAMELDDCAFPLLKRIVCTADLNKAMDGVNWALLVGSVPRKQGMERSDLLQINGGIFTKQGQAINDYASDDVRVFVVGNPCNTNCLIAMNHAKDVPSDRFYAMTTLDELRARTQLAKKAGVDITAVTQMTIWGNHSATQYPDFYNAKINGTSAAQVINDETWLKETFVSTVQQRGAAVIKARGSSSAASAANAIITGVNHLVTDTPAGESFSMCRRSKGEYGVDEGLIFSFPCRREHGELKVVENLEFNDFGRERFNTTLNELRSERDTVKSLGLLD.

Glycine 12–glycine 18 lines the NAD(+) pocket. 2 residues coordinate substrate: arginine 93 and arginine 99. Residues asparagine 106, glutamine 113, and valine 130–asparagine 132 each bind NAD(+). The substrate site is built by asparagine 132 and arginine 163. Histidine 188 serves as the catalytic Proton acceptor.

This sequence belongs to the LDH/MDH superfamily. MDH type 2 family.

It carries out the reaction (S)-malate + NAD(+) = oxaloacetate + NADH + H(+). Its function is as follows. Catalyzes the reversible oxidation of malate to oxaloacetate. The polypeptide is Malate dehydrogenase (Legionella pneumophila subsp. pneumophila (strain Philadelphia 1 / ATCC 33152 / DSM 7513)).